A 282-amino-acid polypeptide reads, in one-letter code: uncharacterized protein (282 aa).

Residues 22-42 (YLFTLGSFVTMFFVLCISPVF) traverse the membrane as a helical segment.

Its subcellular location is the cell membrane. This is an uncharacterized protein from Bacillus anthracis.